A 197-amino-acid polypeptide reads, in one-letter code: Imidazoleglycerol-phosphate dehydratase (197 aa).

This sequence belongs to the imidazoleglycerol-phosphate dehydratase family.

Its subcellular location is the cytoplasm. The catalysed reaction is D-erythro-1-(imidazol-4-yl)glycerol 3-phosphate = 3-(imidazol-4-yl)-2-oxopropyl phosphate + H2O. It participates in amino-acid biosynthesis; L-histidine biosynthesis; L-histidine from 5-phospho-alpha-D-ribose 1-diphosphate: step 6/9. This chain is Imidazoleglycerol-phosphate dehydratase, found in Bradyrhizobium sp. (strain ORS 278).